Reading from the N-terminus, the 199-residue chain is Large ribosomal subunit protein uL4 (199 aa).

The protein belongs to the universal ribosomal protein uL4 family. In terms of assembly, part of the 50S ribosomal subunit.

One of the primary rRNA binding proteins, this protein initially binds near the 5'-end of the 23S rRNA. It is important during the early stages of 50S assembly. It makes multiple contacts with different domains of the 23S rRNA in the assembled 50S subunit and ribosome. Functionally, forms part of the polypeptide exit tunnel. The polypeptide is Large ribosomal subunit protein uL4 (Aquifex aeolicus (strain VF5)).